Consider the following 517-residue polypeptide: 2,3-bisphosphoglycerate-independent phosphoglycerate mutase (517 aa).

Residues Asp14 and Ser64 each contribute to the Mn(2+) site. The active-site Phosphoserine intermediate is Ser64. Substrate is bound by residues His125, 155 to 156, Arg187, Arg193, 259 to 262, and Lys334; these read RD and RPDR. 5 residues coordinate Mn(2+): Asp401, His405, Asp442, His443, and His461.

The protein belongs to the BPG-independent phosphoglycerate mutase family. In terms of assembly, monomer. It depends on Mn(2+) as a cofactor.

The enzyme catalyses (2R)-2-phosphoglycerate = (2R)-3-phosphoglycerate. The protein operates within carbohydrate degradation; glycolysis; pyruvate from D-glyceraldehyde 3-phosphate: step 3/5. Its function is as follows. Catalyzes the interconversion of 2-phosphoglycerate and 3-phosphoglycerate. In Symbiobacterium thermophilum (strain DSM 24528 / JCM 14929 / IAM 14863 / T), this protein is 2,3-bisphosphoglycerate-independent phosphoglycerate mutase.